The sequence spans 240 residues: U1 small nuclear ribonucleoprotein C (240 aa).

The Matrin-type zinc finger occupies 4-36 (YYCEYCDIYLTHSSPVGRRQHIQGRKHISAKIE). Disordered regions lie at residues 86 to 122 (GMKHHSHYSRHSHRHHMSHGRYNRERHGHHSYSSKYH) and 175 to 240 (IDSD…SVDA). 2 stretches are compositionally biased toward basic and acidic residues: residues 178-194 (DPVKDSQNGERVGDNAI) and 203-219 (DQGDRGDLGDHADHADH). A compositionally biased stretch (polar residues) spans 226 to 240 (TDGTANGNDQVSVDA).

Belongs to the U1 small nuclear ribonucleoprotein C family. In terms of assembly, U1 snRNP is composed of the 7 core Sm proteins B/B', D1, D2, D3, E, F and G that assemble in a heptameric protein ring on the Sm site of the small nuclear RNA to form the core snRNP, and at least 3 U1 snRNP-specific proteins U1-70K, U1-A and U1-C. U1-C interacts with U1 snRNA and the 5' splice-site region of the pre-mRNA.

It localises to the nucleus. Component of the spliceosomal U1 snRNP, which is essential for recognition of the pre-mRNA 5' splice-site and the subsequent assembly of the spliceosome. U1-C is directly involved in initial 5' splice-site recognition for both constitutive and regulated alternative splicing. The interaction with the 5' splice-site seems to precede base-pairing between the pre-mRNA and the U1 snRNA. Stimulates commitment or early (E) complex formation by stabilizing the base pairing of the 5' end of the U1 snRNA and the 5' splice-site region. The sequence is that of U1 small nuclear ribonucleoprotein C from Plasmodium vivax (strain Salvador I).